Reading from the N-terminus, the 1155-residue chain is RHO1 GDP-GTP exchange protein 1 (1155 aa).

Met-1 is subject to N-acetylmethionine. The segment covering 100-143 has biased composition (polar residues); sequence NSSPQSFTGDQISPTNKKISINDSTRQDKGNSCTTTSSPSQKRS. A disordered region spans residues 100–249; sequence NSSPQSFTGD…HSRSKSSPVS (150 aa). A phosphoserine mark is found at Ser-154 and Ser-155. Residues 155–167 are compositionally biased toward low complexity; the sequence is SPSLLSFSKNSGS. Thr-180 is modified (phosphothreonine). Positions 190–227 are enriched in low complexity; sequence LHSSFNGKHSSSSTSSLFALESLKTQNRRSSNSSNHSS. A compositionally biased stretch (basic residues) spans 228-243; the sequence is QYRRHTNQHQRHHSRS. Phosphoserine is present on Ser-433. The DH domain maps to 464–651; it reads KRQEAIYELF…KDLMKRIDRA (188 aa). The CNH domain occupies 842–1137; that stretch reads TNRVNDVLIC…RMLKSYAKKI (296 aa).

In terms of biological role, stimulates the exchange of RHO1 GDP-bound form into GTP-bound form. This chain is RHO1 GDP-GTP exchange protein 1 (ROM1), found in Saccharomyces cerevisiae (strain ATCC 204508 / S288c) (Baker's yeast).